A 287-amino-acid chain; its full sequence is 4-diphosphocytidyl-2-C-methyl-D-erythritol kinase (287 aa).

K22 is a catalytic residue. Position 102–112 (102–112 (PAAAGIGGGSS)) interacts with ATP. D139 is an active-site residue.

The protein belongs to the GHMP kinase family. IspE subfamily.

The enzyme catalyses 4-CDP-2-C-methyl-D-erythritol + ATP = 4-CDP-2-C-methyl-D-erythritol 2-phosphate + ADP + H(+). The protein operates within isoprenoid biosynthesis; isopentenyl diphosphate biosynthesis via DXP pathway; isopentenyl diphosphate from 1-deoxy-D-xylulose 5-phosphate: step 3/6. In terms of biological role, catalyzes the phosphorylation of the position 2 hydroxy group of 4-diphosphocytidyl-2C-methyl-D-erythritol. In Dinoroseobacter shibae (strain DSM 16493 / NCIMB 14021 / DFL 12), this protein is 4-diphosphocytidyl-2-C-methyl-D-erythritol kinase.